The primary structure comprises 202 residues: Large ribosomal subunit protein bL9 (202 aa).

The interval 168 to 202 (DEAGFTEDYDPNAEPGEIPTELQDEAPAAEATDEA) is disordered. Positions 192 to 202 (EAPAAEATDEA) are enriched in low complexity.

It belongs to the bacterial ribosomal protein bL9 family.

Its function is as follows. Binds to the 23S rRNA. The protein is Large ribosomal subunit protein bL9 of Rhizorhabdus wittichii (strain DSM 6014 / CCUG 31198 / JCM 15750 / NBRC 105917 / EY 4224 / RW1) (Sphingomonas wittichii).